Here is a 170-residue protein sequence, read N- to C-terminus: Calcineurin subunit B type 2 (170 aa).

Residue G2 is the site of N-myristoyl glycine attachment. EF-hand domains lie at 18 to 46, 50 to 85, 87 to 122, and 128 to 163; these read DEIK…FMSL, RHNP…FSVK, DEEQ…MVGN, and QLQQ…LEIH. Residues D31, D33, S35, S37, E42, D63, D65, D67, E69, E74, D100, D102, D104, Y106, and E111 each contribute to the Ca(2+) site. The interval 131-136 is calcineurin A binding; the sequence is QLVDKT. Positions 141, 143, 145, 147, and 152 each coordinate Ca(2+).

This sequence belongs to the calcineurin regulatory subunit family. In terms of assembly, forms a complex composed of a calmodulin-dependent catalytic subunit (also known as calcineurin A) and a regulatory Ca(2+)-binding subunit (also known as calcineurin B). There are three catalytic subunits, each encoded by a separate gene (PPP3CA, PPP3CB, and PPP3CC) and two regulatory subunits which are also encoded by separate genes (PPP3R1 and PPP3R2). Interacts with SPATA33 (via PQIIIT motif). As to expression, testis-specific.

The protein resides in the mitochondrion. Regulatory subunit of calcineurin, a calcium-dependent, calmodulin stimulated protein phosphatase. Confers calcium sensitivity. In Homo sapiens (Human), this protein is Calcineurin subunit B type 2 (PPP3R2).